The chain runs to 233 residues: UPF0502 protein Mpe_A1449 (233 aa).

The protein belongs to the UPF0502 family.

The chain is UPF0502 protein Mpe_A1449 from Methylibium petroleiphilum (strain ATCC BAA-1232 / LMG 22953 / PM1).